Consider the following 479-residue polypeptide: MMRFLDGHPPGYDLTYNDVFIVPNRSEVASRFDVDLSTADGSGTTIPVVVANMTAVAGRRMAETVARRGGIVILPQDLPIPAVKQTVAFVKSRDLVLDTPVTLAPDDSVSDAMALIHKRAHGVAVVILEGRPIGLVRESSCLGVDRFTRVRDIAVTDYVTAPAGTEPRKIFDLLEHAPVDVAVLTDADGTLAGVLSRTGAIRAGIYTPATDSAGRLRIGAAVGINGDVGAKARALAEAGVDVLVIDTAHGHQVKTLDAIKAVSALDLGLPLAAGNVVSAEGTRDLLKAGANVVKVGVGPGAMCTTRMMTGVGRPQFSAVLECASAARQLGGHIWADGGIRHPRDVALALAAGASNVMIGSWFAGTYESPGDLMRDRDDQPYKESYGMASKRAVVARTGADNPFDRARKALFEEGISTSRMGLDPDRGGVEDLIDHITSGVRSTCTYVGASNLAELHERAVVGVQSGAGFAEGHPLPAGW.

CBS domains follow at residues 96–153 (VLDT…VRDI) and 154–212 (AVTD…ATDS). NADP(+) is bound by residues 246 to 248 (DTA) and 296 to 298 (GVG). Residue Cys303 is the Thioimidate intermediate of the active site.

This sequence belongs to the IMPDH/GMPR family. GuaB1 subfamily. A monovalent cation is required as a cofactor.

It catalyses the reaction IMP + NH4(+) + NADP(+) = GMP + NADPH + 2 H(+). Its pathway is purine metabolism; IMP biosynthesis via salvage pathway. In terms of biological role, involved in the purine-salvage pathway. Catalyzes the NADPH-dependent conversion of GMP to IMP. The chain is GMP reductase from Mycobacterium bovis (strain ATCC BAA-935 / AF2122/97).